A 367-amino-acid polypeptide reads, in one-letter code: Phospho-N-acetylmuramoyl-pentapeptide-transferase (367 aa).

10 helical membrane passes run 28-48 (GALMTAMLIAFVFGKPMIGWL), 75-95 (TMGGFLILLGVMVGTLLWADL), 96-116 (TNAYVWIVIFVTAGFGVIGFI), 134-154 (FKLVGEFAIALIAVVWATHTA), 175-195 (LMINIGPLFFVFGCVVIVGSG), 206-226 (GLAIVPVMIAAATFGVIAYVV), 243-263 (AGEILIFCGALIGAGIGFLWW), 271-291 (FMGDTGSLSLGGALGTIAVAI), 295-315 (LVLAIVGGLFVLELVSVMVQV), and 344-364 (TIVIRFWIIAVILALIGLATL).

This sequence belongs to the glycosyltransferase 4 family. MraY subfamily. It depends on Mg(2+) as a cofactor.

The protein localises to the cell inner membrane. It carries out the reaction UDP-N-acetyl-alpha-D-muramoyl-L-alanyl-gamma-D-glutamyl-meso-2,6-diaminopimeloyl-D-alanyl-D-alanine + di-trans,octa-cis-undecaprenyl phosphate = di-trans,octa-cis-undecaprenyl diphospho-N-acetyl-alpha-D-muramoyl-L-alanyl-D-glutamyl-meso-2,6-diaminopimeloyl-D-alanyl-D-alanine + UMP. It participates in cell wall biogenesis; peptidoglycan biosynthesis. Functionally, catalyzes the initial step of the lipid cycle reactions in the biosynthesis of the cell wall peptidoglycan: transfers peptidoglycan precursor phospho-MurNAc-pentapeptide from UDP-MurNAc-pentapeptide onto the lipid carrier undecaprenyl phosphate, yielding undecaprenyl-pyrophosphoryl-MurNAc-pentapeptide, known as lipid I. The polypeptide is Phospho-N-acetylmuramoyl-pentapeptide-transferase (Maricaulis maris (strain MCS10) (Caulobacter maris)).